We begin with the raw amino-acid sequence, 400 residues long: Lipid-A-disaccharide synthase (400 aa).

It belongs to the LpxB family.

The enzyme catalyses a lipid X + a UDP-2-N,3-O-bis[(3R)-3-hydroxyacyl]-alpha-D-glucosamine = a lipid A disaccharide + UDP + H(+). The protein operates within bacterial outer membrane biogenesis; LPS lipid A biosynthesis. Its function is as follows. Condensation of UDP-2,3-diacylglucosamine and 2,3-diacylglucosamine-1-phosphate to form lipid A disaccharide, a precursor of lipid A, a phosphorylated glycolipid that anchors the lipopolysaccharide to the outer membrane of the cell. In Acidobacterium capsulatum (strain ATCC 51196 / DSM 11244 / BCRC 80197 / JCM 7670 / NBRC 15755 / NCIMB 13165 / 161), this protein is Lipid-A-disaccharide synthase.